A 102-amino-acid chain; its full sequence is Small ribosomal subunit protein eS24 (102 aa).

The protein belongs to the eukaryotic ribosomal protein eS24 family.

The protein is Small ribosomal subunit protein eS24 of Halorubrum lacusprofundi (strain ATCC 49239 / DSM 5036 / JCM 8891 / ACAM 34).